A 342-amino-acid chain; its full sequence is Cathepsin B-like cysteine proteinase (342 aa).

An N-terminal signal peptide occupies residues 1–17 (MLKIAVYIVSLFTFLEA). The propeptide at 18–89 (HVTTRNNQRI…TVDHHDLNVE (72 aa)) is activation peptide. 6 disulfides stabilise this stretch: Cys-103-Cys-132, Cys-115-Cys-159, Cys-151-Cys-217, Cys-152-Cys-155, Cys-188-Cys-221, and Cys-196-Cys-207. Cys-118 is an active-site residue. Catalysis depends on residues His-288 and Asn-308.

Belongs to the peptidase C1 family. In terms of tissue distribution, intestine (gut).

In terms of biological role, thiol protease. Has a role as a digestive enzyme. This is Cathepsin B-like cysteine proteinase (CATB) from Schistosoma japonicum (Blood fluke).